A 229-amino-acid polypeptide reads, in one-letter code: Growth factor receptor-bound protein 2 (229 aa).

SH3 domains lie at 1–58 (MEAV…MKPH) and 168–227 (QQPT…PVNR). An SH2 domain is found at 60–171 (WFFGKIPRAK…RATNLLQQPT (112 aa)).

The protein resides in the nucleus. It is found in the cytoplasm. It localises to the endosome. Its subcellular location is the golgi apparatus. Functionally, adapter protein that provides a critical link between cell surface growth factor receptors and the Ras signaling pathway. Promotes meiotic reinitiation during oocyte maturation. This chain is Growth factor receptor-bound protein 2, found in Xenopus tropicalis (Western clawed frog).